A 203-amino-acid chain; its full sequence is Glycerol-3-phosphate acyltransferase (203 aa).

The next 5 helical transmembrane spans lie at Ile4–Val24, Val56–Leu76, Pro80–Phe100, Phe112–Leu132, and Gly138–Phe158.

This sequence belongs to the PlsY family. As to quaternary structure, probably interacts with PlsX.

It is found in the cell inner membrane. The catalysed reaction is an acyl phosphate + sn-glycerol 3-phosphate = a 1-acyl-sn-glycero-3-phosphate + phosphate. It functions in the pathway lipid metabolism; phospholipid metabolism. Catalyzes the transfer of an acyl group from acyl-phosphate (acyl-PO(4)) to glycerol-3-phosphate (G3P) to form lysophosphatidic acid (LPA). This enzyme utilizes acyl-phosphate as fatty acyl donor, but not acyl-CoA or acyl-ACP. This chain is Glycerol-3-phosphate acyltransferase, found in Enterobacter sp. (strain 638).